A 281-amino-acid chain; its full sequence is Large ribosomal subunit protein uL2 (281 aa).

Residues 210-281 (RTRYAGQRPH…RGRKRGPHTR (72 aa)) form a disordered region. Residues 254 to 281 (TVGKKTRSHKARSNKFIVRGRKRGPHTR) are compositionally biased toward basic residues.

Belongs to the universal ribosomal protein uL2 family. In terms of assembly, part of the 50S ribosomal subunit. Forms a bridge to the 30S subunit in the 70S ribosome.

Functionally, one of the primary rRNA binding proteins. Required for association of the 30S and 50S subunits to form the 70S ribosome, for tRNA binding and peptide bond formation. It has been suggested to have peptidyltransferase activity; this is somewhat controversial. Makes several contacts with the 16S rRNA in the 70S ribosome. The protein is Large ribosomal subunit protein uL2 of Limosilactobacillus reuteri subsp. reuteri (strain JCM 1112) (Lactobacillus reuteri).